Here is a 213-residue protein sequence, read N- to C-terminus: Isopentenyl-diphosphate Delta-isomerase (213 aa).

The segment covering 1–10 has biased composition (basic and acidic residues); sequence MRDSMSEADR. The tract at residues 1-34 is disordered; sequence MRDSMSEADRSSPGSGKTDREDETAENATQDVIA. The Mn(2+) site is built by His-51, His-58, and His-95. Residues 56-193 enclose the Nudix hydrolase domain; that stretch reads VRHRAFTCLL…RQLRLCPWFE (138 aa). Glu-113 is a binding site for Mg(2+). Residues Glu-142 and Glu-144 each contribute to the Mn(2+) site. Residue Glu-144 is part of the active site.

This sequence belongs to the IPP isomerase type 1 family. The cofactor is Mg(2+). It depends on Mn(2+) as a cofactor.

Its subcellular location is the cytoplasm. The catalysed reaction is isopentenyl diphosphate = dimethylallyl diphosphate. The protein operates within isoprenoid biosynthesis; dimethylallyl diphosphate biosynthesis; dimethylallyl diphosphate from isopentenyl diphosphate: step 1/1. Its function is as follows. Catalyzes the 1,3-allylic rearrangement of the homoallylic substrate isopentenyl (IPP) to its highly electrophilic allylic isomer, dimethylallyl diphosphate (DMAPP). The polypeptide is Isopentenyl-diphosphate Delta-isomerase (Halobacterium salinarum (strain ATCC 700922 / JCM 11081 / NRC-1) (Halobacterium halobium)).